We begin with the raw amino-acid sequence, 264 residues long: ATP synthase subunit a (264 aa).

5 consecutive transmembrane segments (helical) span residues 39–59, 97–117, 139–159, 205–225, and 239–259; these read LDTL…FYIV, VAPL…MDLV, TADP…VIFY, LFGN…LPWW, and LLVI…YISL.

Belongs to the ATPase A chain family. As to quaternary structure, F-type ATPases have 2 components, CF(1) - the catalytic core - and CF(0) - the membrane proton channel. CF(1) has five subunits: alpha(3), beta(3), gamma(1), delta(1), epsilon(1). CF(0) has three main subunits: a(1), b(2) and c(9-12). The alpha and beta chains form an alternating ring which encloses part of the gamma chain. CF(1) is attached to CF(0) by a central stalk formed by the gamma and epsilon chains, while a peripheral stalk is formed by the delta and b chains.

Its subcellular location is the cell inner membrane. In terms of biological role, key component of the proton channel; it plays a direct role in the translocation of protons across the membrane. The sequence is that of ATP synthase subunit a from Coxiella burnetii (strain CbuK_Q154) (Coxiella burnetii (strain Q154)).